A 355-amino-acid chain; its full sequence is Peptide chain release factor 1 (355 aa).

Gln-231 is modified (N5-methylglutamine). Residues 280-291 are compositionally biased toward basic and acidic residues; sequence SERLAKESEARK. The tract at residues 280–303 is disordered; that stretch reads SERLAKESEARKSQVGSGDRSERI.

The protein belongs to the prokaryotic/mitochondrial release factor family. In terms of processing, methylated by PrmC. Methylation increases the termination efficiency of RF1.

The protein localises to the cytoplasm. Peptide chain release factor 1 directs the termination of translation in response to the peptide chain termination codons UAG and UAA. The sequence is that of Peptide chain release factor 1 from Campylobacter jejuni subsp. jejuni serotype O:2 (strain ATCC 700819 / NCTC 11168).